A 387-amino-acid chain; its full sequence is 8-amino-7-oxononanoate synthase (387 aa).

Substrate is bound by residues R31 and R38. G118–Y119 contributes to the pyridoxal 5'-phosphate binding site. Residue H143 coordinates substrate. Residues S191, D216–H219, and T236–K239 each bind pyridoxal 5'-phosphate. K239 carries the post-translational modification N6-(pyridoxal phosphate)lysine. Residue T348 coordinates substrate.

It belongs to the class-II pyridoxal-phosphate-dependent aminotransferase family. BioF subfamily. As to quaternary structure, homodimer. The cofactor is pyridoxal 5'-phosphate.

It carries out the reaction 6-carboxyhexanoyl-[ACP] + L-alanine + H(+) = (8S)-8-amino-7-oxononanoate + holo-[ACP] + CO2. Its pathway is cofactor biosynthesis; biotin biosynthesis. Functionally, catalyzes the decarboxylative condensation of pimeloyl-[acyl-carrier protein] and L-alanine to produce 8-amino-7-oxononanoate (AON), [acyl-carrier protein], and carbon dioxide. In Methylorubrum populi (strain ATCC BAA-705 / NCIMB 13946 / BJ001) (Methylobacterium populi), this protein is 8-amino-7-oxononanoate synthase.